The chain runs to 515 residues: GMP synthase [glutamine-hydrolyzing] (515 aa).

A Glutamine amidotransferase type-1 domain is found at 6-198; it reads KVIIIDYGSQ…LFHVAKLKAD (193 aa). Catalysis depends on cysteine 83, which acts as the Nucleophile. Residues histidine 172 and glutamate 174 contribute to the active site. Positions 199–390 constitute a GMPS ATP-PPase domain; the sequence is WTMSSFVERA…LGLPDFIIWR (192 aa). 226 to 232 contacts ATP; that stretch reads SGGIDST.

Homodimer.

The enzyme catalyses XMP + L-glutamine + ATP + H2O = GMP + L-glutamate + AMP + diphosphate + 2 H(+). It participates in purine metabolism; GMP biosynthesis; GMP from XMP (L-Gln route): step 1/1. In terms of biological role, catalyzes the synthesis of GMP from XMP. This chain is GMP synthase [glutamine-hydrolyzing], found in Nitratidesulfovibrio vulgaris (strain DSM 19637 / Miyazaki F) (Desulfovibrio vulgaris).